The chain runs to 587 residues: Monocopper oxidase-like protein SKU5 (587 aa).

The N-terminal stretch at 1-20 (MDLFKILLLVFFVNISFCFA) is a signal peptide. Residues asparagine 14 and asparagine 58 are each glycosylated (N-linked (GlcNAc...) asparagine). Histidine 80 contributes to the Cu cation binding site. Asparagine 107, asparagine 169, asparagine 200, asparagine 257, asparagine 278, asparagine 293, asparagine 342, asparagine 362, asparagine 430, and asparagine 444 each carry an N-linked (GlcNAc...) asparagine glycan. Cu cation is bound at residue histidine 452. A glycan (N-linked (GlcNAc...) asparagine) is linked at asparagine 534. The GPI-anchor amidated serine moiety is linked to residue serine 562. Residues 563–587 (ASKSIGFTSLSMVVMALVMMMMLQH) constitute a propeptide, removed in mature form.

Belongs to the multicopper oxidase family. Cu cation is required as a cofactor. In terms of tissue distribution, expressed in roots, hypocotyls, cotyledons, leaves, stems and flowers.

The protein resides in the secreted. Its subcellular location is the cell wall. The protein localises to the cell membrane. Its function is as follows. May be a monocopper oxidase of unknown specificity. Involved in directional growth processes, possibly by participating in cell wall expansion. This is Monocopper oxidase-like protein SKU5 (SKU5) from Arabidopsis thaliana (Mouse-ear cress).